Reading from the N-terminus, the 748-residue chain is E3 ubiquitin-protein ligase SMURF2 (748 aa).

In terms of domain architecture, C2 spans 1 to 119; sequence MSNPGGRRNG…TGYQRLDLCK (119 aa). A Glycyl lysine isopeptide (Lys-Gly) (interchain with G-Cter in ubiquitin) cross-link involves residue K119. 3 consecutive WW domains span residues 157–190, 251–284, and 297–330; these read NDLP…RPTR, PDLP…DPRV, and GPLP…DPRL. The 335-residue stretch at 414-748 folds into the HECT domain; that stretch reads RPKDLWKRLM…IEETCGFAVE (335 aa). Catalysis depends on C716, which acts as the Glycyl thioester intermediate.

As to quaternary structure, interacts (via WW domains) with SMAD1. Interacts (via WW domains) with SMAD2 (via PY-motif). Interacts (via WW domains) with SMAD3 (via PY-motif). Interacts with SMAD6. Interacts with SMAD7 (via PY-motif) and TGFBR1; SMAD7 recruits SMURF2 to the TGF-beta receptor and regulates its degradation. Does not interact with SMAD4; SMAD4 lacks a PY-motif. Interacts with AIMP1. Interacts with SNON. Interacts with STAMBP and RNF11. May interact with NDFIP1 and NDFIP2; this interaction induces the E3 ubiquitin-protein ligase activity. Interacts with TTC3. In terms of assembly, (Microbial infection) Interacts (via WW domains) with EBOV and MARV VP40 (via PPXY motif); the interaction facilitates VP40 virus-like particle budding. Post-translationally, auto-ubiquitinated and ubiquitinated in the presence of RNF11 and UBE2D1. Ubiquitinated by the SCF(FBXL15) complex and TTC3, leading to its degradation by the proteasome. 'Lys-48'-linked polyubiquitination mediated by TRAF4 at Lys-119 leads to SMURF2 proteasomal degradation. Widely expressed.

It is found in the nucleus. It localises to the cytoplasm. The protein localises to the cell membrane. The protein resides in the membrane raft. The catalysed reaction is S-ubiquitinyl-[E2 ubiquitin-conjugating enzyme]-L-cysteine + [acceptor protein]-L-lysine = [E2 ubiquitin-conjugating enzyme]-L-cysteine + N(6)-ubiquitinyl-[acceptor protein]-L-lysine.. It functions in the pathway protein modification; protein ubiquitination. Activated by NDFIP1- and NDFIP2-binding. Functionally, E3 ubiquitin-protein ligase which accepts ubiquitin from an E2 ubiquitin-conjugating enzyme in the form of a thioester and then directly transfers the ubiquitin to targeted substrates. Interacts with SMAD7 to trigger SMAD7-mediated transforming growth factor beta/TGF-beta receptor ubiquitin-dependent degradation, thereby down-regulating TGF-beta signaling. In addition, interaction with SMAD7 activates autocatalytic degradation, which is prevented by interaction with AIMP1. Also forms a stable complex with TGF-beta receptor-mediated phosphorylated SMAD1, SMAD2 and SMAD3, and targets SMAD1 and SMAD2 for ubiquitination and proteasome-mediated degradation. SMAD2 may recruit substrates, such as SNON, for ubiquitin-dependent degradation. Negatively regulates TGFB1-induced epithelial-mesenchymal transition and myofibroblast differentiation. (Microbial infection) In case of filoviruses Ebola/EBOV and Marburg/MARV infection, the complex formed by viral matrix protein VP40 and SMURF2 facilitates virus budding. The protein is E3 ubiquitin-protein ligase SMURF2 of Homo sapiens (Human).